A 145-amino-acid polypeptide reads, in one-letter code: Monooxygenase AacuP (145 aa).

It belongs to the avfA family.

It functions in the pathway secondary metabolite biosynthesis. Its function is as follows. Monooxygenase; part of the gene cluster that mediates the biosynthesis of the tetrahydroxanthone dimer secalonic acid D. The pathway begins with the synthesis of atrochrysone thioester by the polyketide synthase AacuL. The atrochrysone carboxyl ACP thioesterase AacuM then breaks the thioester bond and releases the atrochrysone carboxylic acid from AacuL. Atrochrysone carboxylic acid is decarboxylated by the decarboxylase AacuI, and oxidized by the anthrone oxygenase AacuG to yield emodin. Emodin is then reduced to emodin hydroquinone by a yet unidentified oxidoreductase. A-ring reduction by the short chain dehydrogenase AacuN, dehydration by the scytalone dehydratase-like protein AacuK and probable spontaneous re-oxidation, results in overall deoxygenation to chrysophanol. Baeyer-Villiger oxidation by the Baeyer-Villiger monooxygenase (BVMO) AacuH then yields monodictyphenone. Monodictyphenone is transformed into compounds with the tetrahydroxanthone skeleton via methylesterification by the methyltransferase AacuQ, followed by the action of the flavin-dependent monooxygenase AacuC, the isomerase AacuP, and the short chain dehydrogenase/reductase AacuF or AacuD. AacuF and AacuD should accept the same compound as a substrate but perform the ketoreduction with a different stereoselectivity, thus yielding blennolides B and A, respectively. In the final step of the biosynthesis, the cytochrome P450 monooxygenase AacuE accepts blennolide B and/or blennolide A to conduct the dimerization reaction to furnish the tetrahydroxanthone dimers, secalonic acids D, B, and F. This Aspergillus aculeatus (strain ATCC 16872 / CBS 172.66 / WB 5094) protein is Monooxygenase AacuP.